The following is a 93-amino-acid chain: Putative regulatory protein Amet_2791 (93 aa).

The protein belongs to the RemA family.

The sequence is that of Putative regulatory protein Amet_2791 from Alkaliphilus metalliredigens (strain QYMF).